A 315-amino-acid polypeptide reads, in one-letter code: Transaldolase (315 aa).

Lysine 131 acts as the Schiff-base intermediate with substrate in catalysis.

It belongs to the transaldolase family. Type 1 subfamily. Homodimer.

The protein resides in the cytoplasm. The enzyme catalyses D-sedoheptulose 7-phosphate + D-glyceraldehyde 3-phosphate = D-erythrose 4-phosphate + beta-D-fructose 6-phosphate. It functions in the pathway carbohydrate degradation; pentose phosphate pathway; D-glyceraldehyde 3-phosphate and beta-D-fructose 6-phosphate from D-ribose 5-phosphate and D-xylulose 5-phosphate (non-oxidative stage): step 2/3. Functionally, transaldolase is important for the balance of metabolites in the pentose-phosphate pathway. This is Transaldolase from Actinobacillus pleuropneumoniae serotype 3 (strain JL03).